The chain runs to 307 residues: Protoheme IX farnesyltransferase (307 aa).

Transmembrane regions (helical) follow at residues 28–48, 50–70, 99–117, 121–138, 146–166, 173–193, 219–239, 241–261, and 278–298; these read LVIF…NPIL, FTAI…NQWW, FGIL…AINW, IILA…TIWL, IVIG…AVTG, VLLF…LALF, ILVY…IGAT, AIYG…SVPV, and LFGF…ADRY.

It belongs to the UbiA prenyltransferase family. Protoheme IX farnesyltransferase subfamily.

It localises to the cell inner membrane. The enzyme catalyses heme b + (2E,6E)-farnesyl diphosphate + H2O = Fe(II)-heme o + diphosphate. The protein operates within porphyrin-containing compound metabolism; heme O biosynthesis; heme O from protoheme: step 1/1. Functionally, converts heme B (protoheme IX) to heme O by substitution of the vinyl group on carbon 2 of heme B porphyrin ring with a hydroxyethyl farnesyl side group. The polypeptide is Protoheme IX farnesyltransferase (Erythrobacter litoralis (strain HTCC2594)).